The sequence spans 334 residues: Transposase for insertion sequence element IS1328 (334 aa).

Belongs to the transposase IS1111A/IS1328/IS1533 family.

Required for the transposition of the insertion element. The protein is Transposase for insertion sequence element IS1328 of Yersinia enterocolitica.